We begin with the raw amino-acid sequence, 291 residues long: Phosphate import ATP-binding protein PstB (291 aa).

Positions 45–286 constitute an ABC transporter domain; the sequence is YSTQNLDLWY…PADKQTEDYI (242 aa). 77 to 84 serves as a coordination point for ATP; sequence GPSGCGKS.

This sequence belongs to the ABC transporter superfamily. Phosphate importer (TC 3.A.1.7) family. In terms of assembly, the complex is composed of two ATP-binding proteins (PstB), two transmembrane proteins (PstC and PstA) and a solute-binding protein (PstS).

It is found in the cell membrane. The catalysed reaction is phosphate(out) + ATP + H2O = ADP + 2 phosphate(in) + H(+). In terms of biological role, part of the ABC transporter complex PstSACB involved in phosphate import. Responsible for energy coupling to the transport system. The polypeptide is Phosphate import ATP-binding protein PstB (Staphylococcus epidermidis (strain ATCC 12228 / FDA PCI 1200)).